Here is a 1009-residue protein sequence, read N- to C-terminus: Lateral signaling target protein 2 homolog (1009 aa).

Disordered stretches follow at residues 313–460 (PVGS…EEQL), 497–629 (ASED…KRCS), and 777–905 (MQRN…TATA). Composition is skewed to low complexity over residues 327 to 348 (SSTP…SSSG), 364 to 398 (QRNN…TPTA), and 406 to 427 (PSHS…HPPA). The segment covering 430 to 458 (SDGDDEDEDEEEDEEEDELEDTEDDTDEE) has biased composition (acidic residues). Ser-541 bears the Phosphoserine mark. The segment covering 544 to 558 (SEPHRDQGETIKSTE) has biased composition (basic and acidic residues). Low complexity predominate over residues 562–575 (QQQQQQEQQTLQSS). Basic residues-rich tracts occupy residues 576–601 (RQRH…HHST) and 609–627 (QPHH…GRKR). The segment covering 780-798 (NNTIDNPSSSNTSSSSATT) has biased composition (low complexity). The residue at position 807 (Ser-807) is a Phosphoserine. Over residues 822-878 (VHQQEQEMQQQQDHQQQQHQHQVQVQLQRQRNNSVGSNTPSSASSTSSSSEQNSPVS) the composition is skewed to low complexity. An FYVE-type zinc finger spans residues 917-977 (DGKAPRCMSC…VCRDCYVREV (61 aa)). Residues Cys-923, Cys-926, Cys-939, Cys-942, Cys-947, Cys-950, Cys-969, and Cys-972 each coordinate Zn(2+).

Belongs to the lst-2 family.

In terms of biological role, negative regulator of epidermal growth factor receptor (EGFR) signaling. This chain is Lateral signaling target protein 2 homolog, found in Drosophila persimilis (Fruit fly).